The primary structure comprises 241 residues: ATP synthase subunit 4, mitochondrial (241 aa).

A mitochondrion-targeting transit peptide spans 1 to 35; sequence MASRLARTAVGAARLRPSVVPRVLPALSTVASPRY.

This sequence belongs to the eukaryotic ATPase B chain family. F-type ATPases have 2 components, CF(1) - the catalytic core - and CF(0) - the membrane proton channel. In yeast, the dimeric form of ATP synthase consists of 17 polypeptides: alpha, beta, gamma, delta, epsilon, 4 (B), 5 (OSCP), 6 (A), 8, 9 (C), d, E (Tim11), f, g, h, i/j and k.

It is found in the mitochondrion. It localises to the mitochondrion inner membrane. Functionally, mitochondrial membrane ATP synthase (F(1)F(0) ATP synthase or Complex V) produces ATP from ADP in the presence of a proton gradient across the membrane which is generated by electron transport complexes of the respiratory chain. F-type ATPases consist of two structural domains, F(1) - containing the extramembraneous catalytic core, and F(0) - containing the membrane proton channel, linked together by a central stalk and a peripheral stalk. During catalysis, ATP synthesis in the catalytic domain of F(1) is coupled via a rotary mechanism of the central stalk subunits to proton translocation. Part of the complex F(0) domain and the peripheric stalk, which acts as a stator to hold the catalytic alpha(3)beta(3) subcomplex and subunit a/atp6 static relative to the rotary elements. This Neurospora crassa (strain ATCC 24698 / 74-OR23-1A / CBS 708.71 / DSM 1257 / FGSC 987) protein is ATP synthase subunit 4, mitochondrial (atp-3).